We begin with the raw amino-acid sequence, 265 residues long: Metallo-beta-lactamase VIM-7 (265 aa).

An N-terminal signal peptide occupies residues 1-17 (MFQIRSFLVGISAFVMA). Residues His-113, His-115, Asp-117, His-178, Cys-197, and His-239 each coordinate Zn(2+).

The protein belongs to the metallo-beta-lactamase superfamily. Class-B beta-lactamase family. As to quaternary structure, monomer. The cofactor is Zn(2+).

The protein resides in the periplasm. It catalyses the reaction a beta-lactam + H2O = a substituted beta-amino acid. Functionally, class B beta-lactamase which confers resistance to the beta-lactam antibiotics, including penicillins, cephalosporins and carbapenems. Acts via hydrolysis of the beta-lactam ring. Has penicillin-, cephalosporin- and carbapenem-hydrolyzing activities. In Pseudomonas aeruginosa, this protein is Metallo-beta-lactamase VIM-7.